The chain runs to 503 residues: MVLLGLLQSGGSVLGQAMEQVTGGNLLSTLLIACAFTLSLVYLFRLAVGHMVQLPAGAKSPPYIYSPIPFLGHAIAFGKSPIEFLENAYEKYGPVFSFTMVGKTFTYLLGSDAAALLFNSKNEDLNAEEVYGRLTTPVFGKGVAYDVPNAVFLEQKKILKSGLNIAHFKQYVSIIEKEAKEYFKSWGESGERNVFEALSELIILTASHCLHGKEIRSQLNEKVAQLYADLDGGFSHAAWLLPGWLPLPSFRRRDRAHREIKNIFYKAIQKRRLSKEPAEDILQTLLDSTYKDGRPLTDDEIAGMLIGLLLAGQHTSSTTSAWMGFFLARDKPLQDKCYLEQKTVCGEDLPPLTYEQLKDLNLLDRCIKETLRLRPPIMTMMRMAKTPQTVAGYTIPPGHQVCVSPTVNQRLKDSWVERLDFNPDRYLQDNPASGEKFAYVPFGAGRHRCIGENFAYVQIKTIWSTMLRLYEFDLINGYFPSVNYTTMIHTPENPVIRYKRRSK.

A helical membrane pass occupies residues 24–44 (GNLLSTLLIACAFTLSLVYLF). Cys-449 contributes to the heme binding site.

This sequence belongs to the cytochrome P450 family. The cofactor is heme. Ubiquitinated by MARCHF6, leading to proteasomal degradation.

It localises to the endoplasmic reticulum membrane. Its subcellular location is the microsome membrane. It carries out the reaction a 14alpha-methyl steroid + 3 reduced [NADPH--hemoprotein reductase] + 3 O2 = a Delta(14) steroid + formate + 3 oxidized [NADPH--hemoprotein reductase] + 4 H2O + 4 H(+). The enzyme catalyses lanosterol + 3 reduced [NADPH--hemoprotein reductase] + 3 O2 = 4,4-dimethyl-5alpha-cholesta-8,14,24-trien-3beta-ol + formate + 3 oxidized [NADPH--hemoprotein reductase] + 4 H2O + 4 H(+). The catalysed reaction is 24,25-dihydrolanosterol + 3 reduced [NADPH--hemoprotein reductase] + 3 O2 = 4,4-dimethyl-8,14-cholestadien-3beta-ol + formate + 3 oxidized [NADPH--hemoprotein reductase] + 4 H2O + 4 H(+). It catalyses the reaction a 14alpha-methyl steroid + reduced [NADPH--hemoprotein reductase] + O2 = a 14alpha-hydroxymethyl steroid + oxidized [NADPH--hemoprotein reductase] + H2O + H(+). It carries out the reaction a 14alpha-hydroxymethyl steroid + reduced [NADPH--hemoprotein reductase] + O2 = a 14alpha-formyl steroid + oxidized [NADPH--hemoprotein reductase] + 2 H2O + H(+). The enzyme catalyses a 14alpha-formyl steroid + reduced [NADPH--hemoprotein reductase] + O2 = a Delta(14) steroid + formate + oxidized [NADPH--hemoprotein reductase] + H2O + 2 H(+). The catalysed reaction is lanosterol + reduced [NADPH--hemoprotein reductase] + O2 = 32-hydroxylanosterol + oxidized [NADPH--hemoprotein reductase] + H2O + H(+). It catalyses the reaction 32-hydroxylanosterol + reduced [NADPH--hemoprotein reductase] + O2 = 32-oxolanosterol + oxidized [NADPH--hemoprotein reductase] + 2 H2O + H(+). It carries out the reaction 32-oxolanosterol + reduced [NADPH--hemoprotein reductase] + O2 = 4,4-dimethyl-5alpha-cholesta-8,14,24-trien-3beta-ol + formate + oxidized [NADPH--hemoprotein reductase] + H2O + 2 H(+). The enzyme catalyses 24,25-dihydrolanosterol + reduced [NADPH--hemoprotein reductase] + O2 = 32-hydroxy-24,25-dihydrolanosterol + oxidized [NADPH--hemoprotein reductase] + H2O + H(+). The catalysed reaction is 32-hydroxy-24,25-dihydrolanosterol + reduced [NADPH--hemoprotein reductase] + O2 = 32-oxo-24,25-dihydrolanosterol + oxidized [NADPH--hemoprotein reductase] + 2 H2O + H(+). It catalyses the reaction 32-oxo-24,25-dihydrolanosterol + reduced [NADPH--hemoprotein reductase] + O2 = 4,4-dimethyl-8,14-cholestadien-3beta-ol + formate + oxidized [NADPH--hemoprotein reductase] + H2O + 2 H(+). It participates in steroid biosynthesis; zymosterol biosynthesis; zymosterol from lanosterol: step 1/6. Its activity is regulated as follows. Inhibited by azalanstat. Inhibited by azole antifungal agents ketoconazole, itraconazole and fluconazole. Sterol 14alpha-demethylase that plays a critical role in the cholesterol biosynthesis pathway, being cholesterol the major sterol component in mammalian membranes as well as a precursor for bile acid and steroid hormone synthesis. Cytochrome P450 monooxygenase that catalyzes the three-step oxidative removal of the 14alpha-methyl group (C-32) of sterols such as lanosterol (lanosta-8,24-dien-3beta-ol) and 24,25-dihydrolanosterol (DHL) in the form of formate, and converts the sterols to 4,4-dimethyl-5alpha-cholesta-8,14,24-trien-3beta-ol and 4,4-dimethyl-8,14-cholestadien-3beta-ol, respectively, which are intermediates of cholesterol biosynthesis. Can also demethylate substrates not intrinsic to mammals, such as eburicol (24-methylene-24,25-dihydrolanosterol), but at a lower rate than DHL. This chain is Lanosterol 14-alpha demethylase, found in Rattus norvegicus (Rat).